A 135-amino-acid chain; its full sequence is Interleukin-4 (135 aa).

An N-terminal signal peptide occupies residues 1–24 (MGLTYQLIPVLVCLLVCTSHFAHG). 3 cysteine pairs are disulfide-bonded: Cys27–Cys135, Cys48–Cys85, and Cys70–Cys105. A glycan (N-linked (GlcNAc...) asparagine) is linked at Asn62.

Belongs to the IL-4/IL-13 family.

The protein resides in the secreted. Functionally, participates in at least several B-cell activation processes as well as of other cell types. It is a costimulator of DNA-synthesis. It induces the expression of class II MHC molecules on resting B-cells. It enhances both secretion and cell surface expression of IgE and IgG1. It also regulates the expression of the low affinity Fc receptor for IgE (CD23) on both lymphocytes and monocytes. Positively regulates IL31RA expression in macrophages. Stimulates autophagy in dendritic cells by interfering with mTORC1 signaling and through the induction of RUFY4. This Boselaphus tragocamelus (Nilgai) protein is Interleukin-4 (IL4).